Reading from the N-terminus, the 430-residue chain is MLNKPEVLIEAITAREILDSRGRPTIEAEVLLETGAFGIAQVPSGASTGSFEAHELRDDDPARYAGKGVLTAVRNVKEKIAPQLLGTNAFDQASIDQKMIDRDGSSNKKELGANAILGVSLATAKAASAELDIPLYRYLGGPLANVLPVPMMNVLNGGSHADNNVDFQEFMIMPVGADSFTEGLRWGAEVFATLSKVLKERKLLSGVGDEGGYAPNLASNQEALDLLIEAIERSNYKPGEQIALAMDVASSEFYKDGQYVYDGSAHSPQEFIDYLAKLVSEYPIISIEDGLQEEDWDNWKLHTQSLGSRIQLVGDDLFVTNPTRLQRGIDLGVANSILIKLNQIGTLTETLETIALATRCQYTSVISHRSGETEDTTIADLAVATRAGQIKTGSLCRSERVAKYNRLLRIEEELGDRALYAPKVGLGPKF.

Gln168 is a binding site for (2R)-2-phosphoglycerate. The active-site Proton donor is the Glu210. Mg(2+) contacts are provided by Asp247, Glu288, and Asp315. Residues Lys340, Arg369, Ser370, and Lys391 each contribute to the (2R)-2-phosphoglycerate site. Catalysis depends on Lys340, which acts as the Proton acceptor.

Belongs to the enolase family. Mg(2+) is required as a cofactor.

It localises to the cytoplasm. Its subcellular location is the secreted. It is found in the cell surface. The enzyme catalyses (2R)-2-phosphoglycerate = phosphoenolpyruvate + H2O. It functions in the pathway carbohydrate degradation; glycolysis; pyruvate from D-glyceraldehyde 3-phosphate: step 4/5. Its function is as follows. Catalyzes the reversible conversion of 2-phosphoglycerate (2-PG) into phosphoenolpyruvate (PEP). It is essential for the degradation of carbohydrates via glycolysis. The sequence is that of Enolase from Rippkaea orientalis (strain PCC 8801 / RF-1) (Cyanothece sp. (strain PCC 8801)).